The sequence spans 339 residues: F420-dependent glucose-6-phosphate dehydrogenase (339 aa).

Residue Asp-41 participates in coenzyme F420-(gamma-Glu)n binding. His-42 acts as the Proton donor in catalysis. Coenzyme F420-(gamma-Glu)n contacts are provided by residues Thr-78 and 109-110 (TG). Residue Glu-111 is the Proton acceptor of the active site. Coenzyme F420-(gamma-Glu)n contacts are provided by residues Asn-114, 177-178 (SG), and 180-181 (AA). 4 residues coordinate substrate: Thr-195, Lys-198, Lys-259, and Arg-283.

This sequence belongs to the F420-dependent glucose-6-phosphate dehydrogenase family. In terms of assembly, homodimer.

It catalyses the reaction oxidized coenzyme F420-(gamma-L-Glu)(n) + D-glucose 6-phosphate + H(+) = 6-phospho-D-glucono-1,5-lactone + reduced coenzyme F420-(gamma-L-Glu)(n). Functionally, catalyzes the coenzyme F420-dependent oxidation of glucose 6-phosphate (G6P) to 6-phosphogluconolactone. This Nakamurella multipartita (strain ATCC 700099 / DSM 44233 / CIP 104796 / JCM 9543 / NBRC 105858 / Y-104) (Microsphaera multipartita) protein is F420-dependent glucose-6-phosphate dehydrogenase.